The sequence spans 840 residues: Leucine--tRNA ligase (840 aa).

The short motif at 44–55 (PYPSANGLHVGH) is the 'HIGH' region element. The short motif at 617–621 (KMSKS) is the 'KMSKS' region element. Residue Lys-620 participates in ATP binding.

The protein belongs to the class-I aminoacyl-tRNA synthetase family.

It is found in the cytoplasm. It carries out the reaction tRNA(Leu) + L-leucine + ATP = L-leucyl-tRNA(Leu) + AMP + diphosphate. This is Leucine--tRNA ligase from Borreliella burgdorferi (strain ZS7) (Borrelia burgdorferi).